We begin with the raw amino-acid sequence, 231 residues long: Aldehyde decarbonylase (231 aa).

Fe cation contacts are provided by Glu32, Glu60, His63, Glu115, and His147.

It belongs to the aldehyde decarbonylase family. The cofactor is Binds 2 metal cations per subunit. The catalytic dinuclear metal-binding site could be either a di-iron or a manganese-iron cofactor..

It carries out the reaction a long-chain fatty aldehyde + 2 NADPH + O2 + H(+) = a long-chain alkane + formate + 2 NADP(+) + H2O. Its function is as follows. Catalyzes the decarbonylation of fatty aldehydes to alkanes. Requires the presence of ferredoxin, ferredoxin reductase and NADPH for in vitro decarbonylase activity. Involved in the biosynthesis of alkanes, mainly heptadecane and pentadecane. The polypeptide is Aldehyde decarbonylase (Synechococcus elongatus (strain ATCC 33912 / PCC 7942 / FACHB-805) (Anacystis nidulans R2)).